Reading from the N-terminus, the 87-residue chain is uncharacterized protein (87 aa).

2 helical membrane-spanning segments follow: residues 7 to 27 and 64 to 84; these read LFFIQIVISIFNSHLAVLYSI and GINIFSFSISLFLIFLTIPLF.

Its subcellular location is the membrane. This is an uncharacterized protein from Schizosaccharomyces pombe (strain 972 / ATCC 24843) (Fission yeast).